Here is an 89-residue protein sequence, read N- to C-terminus: Small ribosomal subunit protein uS15 (89 aa).

The protein belongs to the universal ribosomal protein uS15 family. Part of the 30S ribosomal subunit. Forms a bridge to the 50S subunit in the 70S ribosome, contacting the 23S rRNA.

Its function is as follows. One of the primary rRNA binding proteins, it binds directly to 16S rRNA where it helps nucleate assembly of the platform of the 30S subunit by binding and bridging several RNA helices of the 16S rRNA. In terms of biological role, forms an intersubunit bridge (bridge B4) with the 23S rRNA of the 50S subunit in the ribosome. This chain is Small ribosomal subunit protein uS15, found in Sulfurovum sp. (strain NBC37-1).